A 115-amino-acid polypeptide reads, in one-letter code: NADH-ubiquinone oxidoreductase chain 3 (115 aa).

The next 3 membrane-spanning stretches (helical) occupy residues 4 to 24, 55 to 75, and 87 to 107; these read FMALSVNIILSTCLILIAFWL, FFLVAITFLLFDLEIALLLPL, and MMLTAFILVSILALGLAYEWV.

It belongs to the complex I subunit 3 family. Core subunit of respiratory chain NADH dehydrogenase (Complex I) which is composed of 45 different subunits. Interacts with TMEM186. Interacts with TMEM242.

The protein resides in the mitochondrion inner membrane. The enzyme catalyses a ubiquinone + NADH + 5 H(+)(in) = a ubiquinol + NAD(+) + 4 H(+)(out). Functionally, core subunit of the mitochondrial membrane respiratory chain NADH dehydrogenase (Complex I) which catalyzes electron transfer from NADH through the respiratory chain, using ubiquinone as an electron acceptor. Essential for the catalytic activity of complex I. This is NADH-ubiquinone oxidoreductase chain 3 from Osgoodomys banderanus (Michoacan deer mouse).